The sequence spans 754 residues: 5-methyltetrahydropteroyltriglutamate--homocysteine methyltransferase (754 aa).

5-methyltetrahydropteroyltri-L-glutamate contacts are provided by residues 15-18 (RELK) and lysine 114. L-homocysteine contacts are provided by residues 430–432 (IGS) and glutamate 483. L-methionine contacts are provided by residues 430–432 (IGS) and glutamate 483. Residues 514–515 (RC) and tryptophan 560 each bind 5-methyltetrahydropteroyltri-L-glutamate. Aspartate 598 contributes to the L-homocysteine binding site. Position 598 (aspartate 598) interacts with L-methionine. Residue glutamate 604 coordinates 5-methyltetrahydropteroyltri-L-glutamate. Residues histidine 641, cysteine 643, and glutamate 665 each coordinate Zn(2+). The active-site Proton donor is the histidine 694. Cysteine 726 provides a ligand contact to Zn(2+).

Belongs to the vitamin-B12 independent methionine synthase family. Requires Zn(2+) as cofactor.

It carries out the reaction 5-methyltetrahydropteroyltri-L-glutamate + L-homocysteine = tetrahydropteroyltri-L-glutamate + L-methionine. The protein operates within amino-acid biosynthesis; L-methionine biosynthesis via de novo pathway; L-methionine from L-homocysteine (MetE route): step 1/1. In terms of biological role, catalyzes the transfer of a methyl group from 5-methyltetrahydrofolate to homocysteine resulting in methionine formation. This is 5-methyltetrahydropteroyltriglutamate--homocysteine methyltransferase from Campylobacter jejuni subsp. jejuni serotype O:2 (strain ATCC 700819 / NCTC 11168).